A 169-amino-acid chain; its full sequence is Capsid protein (169 aa).

Belongs to the nanoviridae capsid protein family.

It localises to the virion. In Subterranean clover stunt virus (strain F) (SCSV), this protein is Capsid protein (DNA-S).